The sequence spans 188 residues: Inosine triphosphate pyrophosphatase (188 aa).

11–16 (TGNKHK) lines the ITP pocket. Glutamate 39 is a Mg(2+) binding site. Residues lysine 51, 67-68 (DT), lysine 84, 143-146 (FGWN), and 171-172 (HR) contribute to the ITP site.

This sequence belongs to the HAM1 NTPase family. Homodimer. Mg(2+) is required as a cofactor. It depends on Mn(2+) as a cofactor.

The protein resides in the cytoplasm. It is found in the nucleus. The enzyme catalyses ITP + H2O = IMP + diphosphate + H(+). It catalyses the reaction dITP + H2O = dIMP + diphosphate + H(+). The catalysed reaction is XTP + H2O = XMP + diphosphate + H(+). Functionally, pyrophosphatase that hydrolyzes non-canonical purine nucleotides such as inosine triphosphate (ITP), deoxyinosine triphosphate (dITP) or xanthosine 5'-triphosphate (XTP) to their respective monophosphate derivatives. The enzyme does not distinguish between the deoxy- and ribose forms. Probably excludes non-canonical purines from RNA and DNA precursor pools, thus preventing their incorporation into RNA and DNA and avoiding chromosomal lesions. In Schizosaccharomyces pombe (strain 972 / ATCC 24843) (Fission yeast), this protein is Inosine triphosphate pyrophosphatase.